Reading from the N-terminus, the 270-residue chain is Glutamate racemase (270 aa).

Substrate is bound by residues 14–15 and 46–47; these read DS and YG. The Proton donor/acceptor role is filled by Cys-77. A substrate-binding site is contributed by 78 to 79; it reads NT. Cys-189 acts as the Proton donor/acceptor in catalysis. 190 to 191 lines the substrate pocket; that stretch reads TH.

The protein belongs to the aspartate/glutamate racemases family.

It carries out the reaction L-glutamate = D-glutamate. Its pathway is cell wall biogenesis; peptidoglycan biosynthesis. Functionally, provides the (R)-glutamate required for cell wall biosynthesis. The polypeptide is Glutamate racemase (Neisseria meningitidis serogroup A / serotype 4A (strain DSM 15465 / Z2491)).